The primary structure comprises 97 residues: Large ribosomal subunit protein bL28 (97 aa).

The protein belongs to the bacterial ribosomal protein bL28 family.

This Rickettsia typhi (strain ATCC VR-144 / Wilmington) protein is Large ribosomal subunit protein bL28.